We begin with the raw amino-acid sequence, 217 residues long: UDP-N-acetylglucosamine transferase subunit ALG14 (217 aa).

Residues 1–3 (MLS) are Lumenal-facing. Residues 4-26 (ILILAATAAGLVILLFQRLWTVL) traverse the membrane as a helical segment. At 27 to 217 (GPHHVTPRES…PKSVYLGRIV (191 aa)) the chain is on the cytoplasmic side.

It belongs to the ALG14 family. Forms with ALG13 the active heterodimeric UDP-N-acetylglucosamine transferase complex.

It localises to the endoplasmic reticulum membrane. Part of the UDP-N-acetylglucosamine transferase complex that operates in the biosynthetic pathway of dolichol-linked oligosaccharides, the glycan precursors employed in protein asparagine (N)-glycosylation. The assembly of dolichol-linked oligosaccharides begins on the cytosolic side of the endoplasmic reticulum membrane and finishes in its lumen. The sequential addition of sugars to dolichol pyrophosphate produces dolichol-linked oligosaccharides containing fourteen sugars, including two GlcNAcs, nine mannoses and three glucoses. Once assembled, the oligosaccharides are transferred from the lipid to nascent proteins by oligosaccharyltransferases. Functions as a protein-membrane adapter recruiting ALG13 at the cytoplasmic face of the endoplasmic reticulum, where the complex catalyzes the second step of dolichol pyrophosphate biosynthesis, transferring a beta1,4-linked N-acetylglucosamine (GlcNAc) from UDP-GlcNAc to GlcNAc-pyrophosphatedolichol (Gn-PDol) to produce N,N'-diacetylchitobiosyl diphosphodolichol. N,N'-diacetylchitobiosyl diphosphodolichol is a substrate for ALG1, the following enzyme in the biosynthetic pathway. The polypeptide is UDP-N-acetylglucosamine transferase subunit ALG14 (Mus musculus (Mouse)).